A 260-amino-acid chain; its full sequence is Kallikrein-8 (260 aa).

The N-terminal stretch at 1 to 28 (MGRPPPCAIQTWILLFLLMGAWAGLTRA) is a signal peptide. The propeptide occupies 29–32 (QGSK). A Peptidase S1 domain is found at 33-257 (ILEGQECKPH…YTNWIKKTMG (225 aa)). Intrachain disulfides connect Cys-39/Cys-173, Cys-58/Cys-74, Cys-145/Cys-246, Cys-152/Cys-218, Cys-184/Cys-198, and Cys-208/Cys-233. Catalysis depends on His-73, which acts as the Charge relay system. Asn-110 carries N-linked (GlcNAc...) asparagine glycosylation. The active-site Charge relay system is Asp-120. Ser-212 acts as the Charge relay system in catalysis.

This sequence belongs to the peptidase S1 family. Kallikrein subfamily. Interacts with SPINK9. Restricted to hippocampus.

The protein resides in the secreted. Its subcellular location is the cytoplasm. It catalyses the reaction Cleavage of amide substrates following the basic amino acids Arg or Lys at the P1 position, with a preference for Arg over Lys.. In terms of biological role, serine protease which is capable of degrading a number of proteins such as casein, fibrinogen, kininogen, fibronectin and collagen type IV. Also cleaves L1CAM in response to increased neural activity. Induces neurite outgrowth and fasciculation of cultured hippocampal neurons. Plays a role in the formation and maturation of orphan and small synaptic boutons in the Schaffer-collateral pathway, regulates Schaffer-collateral long-term potentiation in the hippocampus and is required for memory acquisition and synaptic plasticity. Involved in skin desquamation and keratinocyte proliferation. Plays a role in the secondary phase of pathogenesis following spinal cord injury. This Rattus norvegicus (Rat) protein is Kallikrein-8 (Klk8).